The chain runs to 631 residues: Phosphomethylpyrimidine synthase (631 aa).

Substrate-binding positions include Asn-239, Met-268, Tyr-297, His-333, 353–355, 394–397, and Glu-433; these read SRG and DGLR. His-437 is a Zn(2+) binding site. Residue Tyr-460 coordinates substrate. His-501 contributes to the Zn(2+) binding site. Cys-581, Cys-584, and Cys-589 together coordinate [4Fe-4S] cluster.

It belongs to the ThiC family. Homodimer. It depends on [4Fe-4S] cluster as a cofactor.

It carries out the reaction 5-amino-1-(5-phospho-beta-D-ribosyl)imidazole + S-adenosyl-L-methionine = 4-amino-2-methyl-5-(phosphooxymethyl)pyrimidine + CO + 5'-deoxyadenosine + formate + L-methionine + 3 H(+). Its pathway is cofactor biosynthesis; thiamine diphosphate biosynthesis. In terms of biological role, catalyzes the synthesis of the hydroxymethylpyrimidine phosphate (HMP-P) moiety of thiamine from aminoimidazole ribotide (AIR) in a radical S-adenosyl-L-methionine (SAM)-dependent reaction. The polypeptide is Phosphomethylpyrimidine synthase (Salmonella gallinarum (strain 287/91 / NCTC 13346)).